The sequence spans 464 residues: Divalent metal cation transporter MntH (464 aa).

A run of 11 helical transmembrane segments spans residues 57-77 (ILIA…AGGA), 82-102 (SLLS…SMAA), 125-145 (GIIL…AEII), 157-177 (IPLV…LLLM), 186-206 (AIVA…VFLA), 229-249 (MLYL…LYLG), 281-301 (LTIA…LFFG), 321-341 (IVGA…LLSS), 376-396 (LLSV…EAKI), 399-419 (LLTL…VPLV), and 443-463 (VATV…VGVI).

It belongs to the NRAMP family.

It localises to the cell membrane. Functionally, h(+)-stimulated, divalent metal cation uptake system. The protein is Divalent metal cation transporter MntH of Levilactobacillus brevis (Lactobacillus brevis).